Consider the following 140-residue polypeptide: ATP synthase epsilon chain (140 aa).

This sequence belongs to the ATPase epsilon chain family. In terms of assembly, F-type ATPases have 2 components, CF(1) - the catalytic core - and CF(0) - the membrane proton channel. CF(1) has five subunits: alpha(3), beta(3), gamma(1), delta(1), epsilon(1). CF(0) has three main subunits: a, b and c.

It is found in the cell membrane. Produces ATP from ADP in the presence of a proton gradient across the membrane. The polypeptide is ATP synthase epsilon chain (atpC) (Enterococcus hirae (strain ATCC 9790 / DSM 20160 / JCM 8729 / LMG 6399 / NBRC 3181 / NCIMB 6459 / NCDO 1258 / NCTC 12367 / WDCM 00089 / R)).